A 183-amino-acid polypeptide reads, in one-letter code: Ribosome rescue factor SmrB (183 aa).

In terms of domain architecture, Smr spans 98-173 (LDLHGLTQLQ…GDAALLVLIE (76 aa)).

The protein belongs to the SmrB family. In terms of assembly, associates with collided ribosomes, but not with correctly translating polysomes.

Acts as a ribosome collision sensor. Detects stalled/collided disomes (pairs of ribosomes where the leading ribosome is stalled and a second ribosome has collided with it) and endonucleolytically cleaves mRNA at the 5' boundary of the stalled ribosome. Stalled/collided disomes form a new interface (primarily via the 30S subunits) that binds SmrB. Cleaved mRNA becomes available for tmRNA ligation, leading to ribosomal subunit dissociation and rescue of stalled ribosomes. The sequence is that of Ribosome rescue factor SmrB from Shigella boydii serotype 18 (strain CDC 3083-94 / BS512).